A 214-amino-acid chain; its full sequence is uncharacterized protein (214 aa).

The next 5 membrane-spanning stretches (helical) occupy residues 33–53 (VILF…ILVV), 104–124 (ILGI…SYVL), 132–152 (FIYL…LSAS), 153–173 (GGVL…FGTK), and 186–206 (LLIL…TITF).

It is found in the cell membrane. This is an uncharacterized protein from Methanocaldococcus jannaschii (strain ATCC 43067 / DSM 2661 / JAL-1 / JCM 10045 / NBRC 100440) (Methanococcus jannaschii).